A 230-amino-acid chain; its full sequence is Biosynthetic peptidoglycan transglycosylase (230 aa).

A helical membrane pass occupies residues 10-30 (IFLFFIAVIFVYQFWIFSQIV).

It belongs to the glycosyltransferase 51 family.

The protein resides in the cell inner membrane. It carries out the reaction [GlcNAc-(1-&gt;4)-Mur2Ac(oyl-L-Ala-gamma-D-Glu-L-Lys-D-Ala-D-Ala)](n)-di-trans,octa-cis-undecaprenyl diphosphate + beta-D-GlcNAc-(1-&gt;4)-Mur2Ac(oyl-L-Ala-gamma-D-Glu-L-Lys-D-Ala-D-Ala)-di-trans,octa-cis-undecaprenyl diphosphate = [GlcNAc-(1-&gt;4)-Mur2Ac(oyl-L-Ala-gamma-D-Glu-L-Lys-D-Ala-D-Ala)](n+1)-di-trans,octa-cis-undecaprenyl diphosphate + di-trans,octa-cis-undecaprenyl diphosphate + H(+). It participates in cell wall biogenesis; peptidoglycan biosynthesis. Its function is as follows. Peptidoglycan polymerase that catalyzes glycan chain elongation from lipid-linked precursors. The sequence is that of Biosynthetic peptidoglycan transglycosylase from Nitrosospira multiformis (strain ATCC 25196 / NCIMB 11849 / C 71).